Here is a 123-residue protein sequence, read N- to C-terminus: uncharacterized protein (123 aa).

Residues glycine 5–tyrosine 25 traverse the membrane as a helical segment. The tract at residues proline 33 to histidine 54 is disordered. Pro residues predominate over residues valine 35 to proline 47.

It belongs to the asfivirus CP123L family.

The protein resides in the host membrane. Its subcellular location is the virion. This is an uncharacterized protein from African swine fever virus (isolate Warthog/Namibia/Wart80/1980) (ASFV).